Consider the following 38-residue polypeptide: Potassium channel toxin alpha-KTx 2.13 (38 aa).

3 disulfides stabilise this stretch: Cys7-Cys29, Cys13-Cys34, and Cys17-Cys36.

Belongs to the short scorpion toxin superfamily. Potassium channel inhibitor family. Alpha-KTx 02 subfamily. Expressed by the venom gland.

The protein resides in the secreted. Functionally, selective inhibitor of voltage-gated potassium channels, blocks the Kv1.2/KCNA2 (Kd=1.3 nM) and Kv1.3/KCNA3 (Kd=7.2 nM) channels. Association and dissociation rates of the toxin are slower for Kv1.2/KCNA2 than for Kv1.3/KCNA3. In Centruroides suffusus (Durango bark scorpion), this protein is Potassium channel toxin alpha-KTx 2.13.